A 1232-amino-acid chain; its full sequence is Nitrate reductase alpha subunit (1232 aa).

Residues 53–117 (DKVVRSTHGV…SFSWYSYSPT (65 aa)) enclose the 4Fe-4S Mo/W bis-MGD-type domain. His-60, Cys-64, Cys-68, and Cys-103 together coordinate [4Fe-4S] cluster. Residue Asp-233 participates in Mo-bis(molybdopterin guanine dinucleotide) binding.

It belongs to the prokaryotic molybdopterin-containing oxidoreductase family. The cofactor is [4Fe-4S] cluster. It depends on Mo-bis(molybdopterin guanine dinucleotide) as a cofactor.

Its subcellular location is the cell membrane. It catalyses the reaction nitrate + a quinol = a quinone + nitrite + H2O. Its function is as follows. The alpha chain is the actual site of nitrate reduction. This chain is Nitrate reductase alpha subunit (narG), found in Mycobacterium tuberculosis (strain CDC 1551 / Oshkosh).